The primary structure comprises 217 residues: NADPH-dependent 3-demethoxyubiquinone 3-hydroxylase, mitochondrial (217 aa).

The transit peptide at methionine 1–phenylalanine 34 directs the protein to the mitochondrion. 2 repeat units span residues alanine 48–leucine 129 and glycine 130–leucine 217. The tract at residues alanine 48 to leucine 217 is 2 X approximate tandem repeats. NADH is bound at residue arginine 51. The Fe cation site is built by glutamate 60, glutamate 90, histidine 93, glutamate 142, glutamate 178, and histidine 181. Residues lysine 208, tyrosine 212, and arginine 216 each coordinate NADH.

This sequence belongs to the COQ7 family. In terms of assembly, component of a multi-subunit COQ enzyme complex. Interacts with COQ8B and COQ6. Interacts with COQ9. Requires Fe cation as cofactor.

The protein resides in the mitochondrion inner membrane. The catalysed reaction is a 5-methoxy-2-methyl-3-(all-trans-polyprenyl)benzoquinone + NADH + O2 = a 3-demethylubiquinone + NAD(+) + H2O. It functions in the pathway cofactor biosynthesis; ubiquinone biosynthesis. Functionally, catalyzes the hydroxylation of the 5-methoxy-2-methyl-3-(all-trans-polyprenyl)benzoquinone at the C6 position and participates in the biosynthesis of ubiquinone. Catalyzes the reaction through a substrate-mediated reduction pathway, whereby NADH shuttles electrons to 5-methoxy-2-methyl-3-(all-trans-decaprenyl)benzoquinone, which then transfers the electrons to the two Fe(3+) centers. The binding of 5-methoxy-2-methyl-3-(all-trans-polyprenyl)benzoquinone (DMQn) mediates reduction of the diiron center by nicotinamide adenine dinucleotide (NADH) and initiates oxygen activation for subsequent DMQ hydroxylation. The physiological substrates are 5-methoxy-2-methyl-3-(all-trans-nonaprenyl)benzoquinone (DMQ(9)) and 5-methoxy-2-methyl-3-(all-trans-decaprenyl)benzoquinone (DMQ(10)), however in vitro the enzyme does not have any specificity concerning the length of the polyprenyl tail, and accepts tails of various lengths with similar efficiency. Also has a structural role in the COQ enzyme complex, stabilizing other COQ polypeptides. Involved in lifespan determination in a ubiquinone-independent manner. Plays a role in modulating mitochondrial stress responses, acting in the nucleus, perhaps via regulating gene expression, independent of its characterized mitochondrial function in ubiquinone biosynthesis. This is NADPH-dependent 3-demethoxyubiquinone 3-hydroxylase, mitochondrial from Bos taurus (Bovine).